The chain runs to 538 residues: Mevalonate kinase erg12 (538 aa).

Positions 1–87 are disordered; that stretch reads MGNPRGRRTN…RNMSRKPSSP (87 aa). The span at 9–29 shows a compositional bias: polar residues; the sequence is TNGSIKTSKGTQRGTVSNLLS. Over residues 57–69 the composition is skewed to low complexity; that stretch reads TTPSTTESTLKTT. ATP-binding positions include Lys-99, Ser-231, and 236 to 242; that span reads GAGLGSS. Mg(2+)-binding residues include Ser-242 and Glu-287. The active-site Proton acceptor is the Asp-298.

The protein belongs to the GHMP kinase family. Mevalonate kinase subfamily. Homodimer. Requires Mg(2+) as cofactor.

The protein resides in the cytoplasm. It localises to the cytosol. It carries out the reaction (R)-mevalonate + ATP = (R)-5-phosphomevalonate + ADP + H(+). It functions in the pathway isoprenoid biosynthesis; isopentenyl diphosphate biosynthesis via mevalonate pathway; isopentenyl diphosphate from (R)-mevalonate: step 1/3. Functionally, mevalonate kinase; part of the second module of ergosterol biosynthesis pathway that includes the middle steps of the pathway. Erg12 converts mevalonate into 5-phosphomevalonate. The second module is carried out in the vacuole and involves the formation of farnesyl diphosphate, which is also an important intermediate in the biosynthesis of ubiquinone, dolichol, heme and prenylated proteins. Activity by the mevalonate kinase erg12 (AFUA_4G07780) first converts mevalonate into 5-phosphomevalonate. 5-phosphomevalonate is then further converted to 5-diphosphomevalonate by the phosphomevalonate kinase erg8 (AFUA_5G10680). The diphosphomevalonate decarboxylase mvd1 (AFUA_4G07130) then produces isopentenyl diphosphate. The isopentenyl-diphosphate delta-isomerase idi1 (AFUA_6G11160) then catalyzes the 1,3-allylic rearrangement of the homoallylic substrate isopentenyl (IPP) to its highly electrophilic allylic isomer, dimethylallyl diphosphate (DMAPP). Finally the farnesyl diphosphate synthase erg20 (AFUA_5G02450) catalyzes the sequential condensation of isopentenyl pyrophosphate with dimethylallyl pyrophosphate, and then with the resultant geranylpyrophosphate to the ultimate product farnesyl pyrophosphate. The protein is Mevalonate kinase erg12 of Aspergillus fumigatus (strain ATCC MYA-4609 / CBS 101355 / FGSC A1100 / Af293) (Neosartorya fumigata).